Here is a 428-residue protein sequence, read N- to C-terminus: Palmitoyltransferase pfa4 (428 aa).

The Cytoplasmic segment spans residues 1 to 10; the sequence is MLCRSFNISQ. Residues 11–31 traverse the membrane as a helical segment; that stretch reads LAIPFVSVLISFLAYTSQLFF. Over 32-43 the chain is Lumenal; it reads YYFEEAPLRSEE. Residues 44-61 form a helical membrane-spanning segment; that stretch reads FWRLNIFAVCIWVCYYRA. Topologically, residues 62 to 134 are cytoplasmic; sequence CTVDPGRIPK…SNCVSHFTYP (73 aa). Residues 91-141 form the DHHC domain; sequence RWCRRCEAFKPPRAHHCKTCQRCIPKMDHHCPWTSNCVSHFTYPHFMRFLF. Cysteine 121 functions as the S-palmitoyl cysteine intermediate in the catalytic mechanism. A helical membrane pass occupies residues 135-155; sequence HFMRFLFYAVVGMGYLETLLF. Over 156-177 the chain is Lumenal; it reads ERASIVWASRHLPSYLGPGLGQ. The chain crosses the membrane as a helical span at residues 178 to 198; sequence LVHLFILLVVNSLTWLALFIL. Residues 199-428 lie on the Cytoplasmic side of the membrane; sequence LLRSIWSLAL…GILMQRRRQQ (230 aa). Residues 339–400 are disordered; the sequence is QRSNDASHSG…WKNSEGDRLR (62 aa). Residues 360–373 show a composition bias toward basic and acidic residues; that stretch reads DRFNENKAKERLSE. The span at 374 to 388 shows a compositional bias: acidic residues; sequence SESDFSDDEEVQDGE. Residues 389–400 are compositionally biased toward basic and acidic residues; sequence EGWKNSEGDRLR.

The protein belongs to the DHHC palmitoyltransferase family. PFA4 subfamily.

The protein localises to the endoplasmic reticulum membrane. The catalysed reaction is L-cysteinyl-[protein] + hexadecanoyl-CoA = S-hexadecanoyl-L-cysteinyl-[protein] + CoA. Mediates the reversible addition of palmitate to target proteins, thereby regulating their membrane association and biological function. This chain is Palmitoyltransferase pfa4, found in Aspergillus fumigatus (strain ATCC MYA-4609 / CBS 101355 / FGSC A1100 / Af293) (Neosartorya fumigata).